The primary structure comprises 107 residues: Large ribosomal subunit protein uL24 (107 aa).

This sequence belongs to the universal ribosomal protein uL24 family. As to quaternary structure, part of the 50S ribosomal subunit.

Its function is as follows. One of two assembly initiator proteins, it binds directly to the 5'-end of the 23S rRNA, where it nucleates assembly of the 50S subunit. Functionally, one of the proteins that surrounds the polypeptide exit tunnel on the outside of the subunit. This Coxiella burnetii (strain Dugway 5J108-111) protein is Large ribosomal subunit protein uL24.